We begin with the raw amino-acid sequence, 354 residues long: Ribosomal RNA large subunit methyltransferase M (354 aa).

Residues S183, 216–219, D235, D255, and D271 each bind S-adenosyl-L-methionine; that span reads SPGG. Residue K300 is the Proton acceptor of the active site.

Belongs to the class I-like SAM-binding methyltransferase superfamily. RNA methyltransferase RlmE family. RlmM subfamily. As to quaternary structure, monomer.

The protein resides in the cytoplasm. It catalyses the reaction cytidine(2498) in 23S rRNA + S-adenosyl-L-methionine = 2'-O-methylcytidine(2498) in 23S rRNA + S-adenosyl-L-homocysteine + H(+). Catalyzes the 2'-O-methylation at nucleotide C2498 in 23S rRNA. The chain is Ribosomal RNA large subunit methyltransferase M from Pseudomonas putida (strain ATCC 700007 / DSM 6899 / JCM 31910 / BCRC 17059 / LMG 24140 / F1).